Reading from the N-terminus, the 406-residue chain is tRNA-specific 2-thiouridylase MnmA (406 aa).

ATP contacts are provided by residues G42–S49 and L68. Residue C129 is the Nucleophile of the active site. Residues C129 and C237 are joined by a disulfide bond. G154 lines the ATP pocket. Residues K187–Q189 form an interaction with tRNA region. Catalysis depends on C237, which acts as the Cysteine persulfide intermediate. An interaction with tRNA region spans residues R342 to Y343.

It belongs to the MnmA/TRMU family.

It is found in the cytoplasm. It carries out the reaction S-sulfanyl-L-cysteinyl-[protein] + uridine(34) in tRNA + AH2 + ATP = 2-thiouridine(34) in tRNA + L-cysteinyl-[protein] + A + AMP + diphosphate + H(+). In terms of biological role, catalyzes the 2-thiolation of uridine at the wobble position (U34) of tRNA, leading to the formation of s(2)U34. The chain is tRNA-specific 2-thiouridylase MnmA from Prochlorococcus marinus (strain MIT 9211).